Reading from the N-terminus, the 388-residue chain is Methylthioribose-1-phosphate isomerase (388 aa).

The active-site Proton donor is the Asp-258.

The protein belongs to the eIF-2B alpha/beta/delta subunits family. MtnA subfamily.

It is found in the cytoplasm. The protein localises to the nucleus. The catalysed reaction is 5-(methylsulfanyl)-alpha-D-ribose 1-phosphate = 5-(methylsulfanyl)-D-ribulose 1-phosphate. Its pathway is amino-acid biosynthesis; L-methionine biosynthesis via salvage pathway; L-methionine from S-methyl-5-thio-alpha-D-ribose 1-phosphate: step 1/6. Its function is as follows. Catalyzes the interconversion of methylthioribose-1-phosphate (MTR-1-P) into methylthioribulose-1-phosphate (MTRu-1-P). The chain is Methylthioribose-1-phosphate isomerase (mri-1) from Neurospora crassa (strain ATCC 24698 / 74-OR23-1A / CBS 708.71 / DSM 1257 / FGSC 987).